The sequence spans 316 residues: Apolipoprotein E (316 aa).

The signal sequence occupies residues 1 to 18; the sequence is MKVLWVALVVALLAGCQA. 8 consecutive repeat copies span residues 79–100, 101–122, 123–144, 145–166, 167–188, 189–210, 211–232, and 233–254. The 8 X 22 AA approximate tandem repeats stretch occupies residues 79 to 254; that stretch reads VLMEETMKEV…RLDKMRQQLE (176 aa). A Methionine sulfoxide modification is found at Met-142. Phosphoserine is present on Ser-146. Residues 157–167 form an LDL and other lipoprotein receptors binding region; that stretch reads HLRKLRKRLLR. Residue 161–164 participates in heparin binding; it reads LRKR. The lipid-binding and lipoprotein association stretch occupies residues 209 to 289; it reads AATLSTQVGQ…SWFEPLVEDM (81 aa). 228-235 contributes to the heparin binding site; sequence RQKLHGRL. The segment at 265–316 is homooligomerization; it reads SQIRLQAEAFQARLRSWFEPLVEDMQRQWAGLVEKVQLALHLSPTSPPSENH. The segment at 277-289 is specificity for association with VLDL; sequence RLRSWFEPLVEDM.

The protein belongs to the apolipoprotein A1/A4/E family. In terms of assembly, homotetramer. May interact with ABCA1; functionally associated with ABCA1 in the biogenesis of HDLs. May interact with APP/A4 amyloid-beta peptide; the interaction is extremely stable in vitro but its physiological significance is unclear. May interact with MAPT. May interact with MAP2. In the cerebrospinal fluid, interacts with secreted SORL1. Interacts with PMEL; this allows the loading of PMEL luminal fragment on ILVs to induce fibril nucleation. Post-translationally, APOE exists as multiple glycosylated and sialylated glycoforms within cells and in plasma. The extent of glycosylation and sialylation are tissue and context specific. Glycated in plasma VLDL. In terms of processing, phosphorylated by FAM20C in the extracellular medium.

It localises to the secreted. The protein localises to the extracellular space. It is found in the extracellular matrix. Its subcellular location is the extracellular vesicle. The protein resides in the endosome. It localises to the multivesicular body. APOE is an apolipoprotein, a protein associating with lipid particles, that mainly functions in lipoprotein-mediated lipid transport between organs via the plasma and interstitial fluids. APOE is a core component of plasma lipoproteins and is involved in their production, conversion and clearance. Apolipoproteins are amphipathic molecules that interact both with lipids of the lipoprotein particle core and the aqueous environment of the plasma. As such, APOE associates with chylomicrons, chylomicron remnants, very low density lipoproteins (VLDL) and intermediate density lipoproteins (IDL) but shows a preferential binding to high-density lipoproteins (HDL). It also binds a wide range of cellular receptors including the LDL receptor/LDLR and the very low-density lipoprotein receptor/VLDLR that mediate the cellular uptake of the APOE-containing lipoprotein particles. Finally, APOE also has a heparin-binding activity and binds heparan-sulfate proteoglycans on the surface of cells, a property that supports the capture and the receptor-mediated uptake of APOE-containing lipoproteins by cells. This is Apolipoprotein E (APOE) from Ovis aries (Sheep).